A 449-amino-acid polypeptide reads, in one-letter code: Plasmepsin IV (449 aa).

Residues 1 to 37 lie on the Cytoplasmic side of the membrane; sequence MALTVKEEEFSNTLIKNASAFDRLKLGNLKNLKIQKK. A propeptide spanning residues 1-121 is cleaved from the precursor; it reads MALTVKEEEF…SGYAQKGYLG (121 aa). The helical; Signal-anchor for type II membrane protein transmembrane segment at 38 to 58 threads the bilayer; that stretch reads LQFLYLILFVLITGVFFFFLI. The Lumenal portion of the chain corresponds to 59–449; that stretch reads GNFYSHRKLY…SVGFAVAKNL (391 aa). In terms of domain architecture, Peptidase A1 spans 137–444; the sequence is FYGEGQIGTN…DYEKESVGFA (308 aa). Residue Asp155 is part of the active site. Cys168 and Cys173 form a disulfide bridge. Asp335 is an active-site residue. Cys370 and Cys406 form a disulfide bridge.

Belongs to the peptidase A1 family. As to quaternary structure, component of the hemozoin formation complex (HFC) composed of falcipains FP2A and/or FP2B, plasmepsins PMII, PMIII/HAP and PMIV, heme detoxifying protein HDP and falcilysin FLN. The HFC complex is involved in hemoglobin degradation and detoxification of heme in the food vacuole during the asexual blood stage. Post-translationally, proteolytically cleaved into the soluble active mature form by cysteine proteases in the digestive vacuole of trophozoites. Proteolysis requires an acidic environment. Autoprocessing or transprocessing by other plasmepsins such as PMII may serve as an alternate activation system.

The protein resides in the membrane. Its subcellular location is the vacuole lumen. The enzyme catalyses Hydrolysis of the bonds linking certain hydrophobic residues in hemoglobin or globin. Also cleaves small molecules substrates such as Ala-Leu-Glu-Arg-Thr-Phe-|-Phe(NO2)-Ser-Phe-Pro-Thr.. Its activity is regulated as follows. Inhibited by KNI derived compounds KNI-10333 and to a lesser extent KNI-10743. In terms of biological role, during the asexual blood stage, catalyzes the cleavage of denatured host hemoglobin (Hb). Digestion of host Hb is an essential step which provides the parasite with amino acids for protein synthesis, and regulates osmolarity. The sequence is that of Plasmepsin IV from Plasmodium falciparum (isolate 3D7).